The chain runs to 170 residues: Myosin regulatory light chain 2, skeletal muscle isoform (170 aa).

A N,N,N-trimethylalanine modification is found at Ala2. Phosphoserine occurs at positions 16 and 17. Thr26 and Thr36 each carry phosphothreonine. One can recognise an EF-hand 1 domain in the interval 26–61 (TQIQEFKEAFTVIDQNRDGIIDKEDLRDTFAAMGRL). Residues Asp39, Asn41, Asp43, and Asp50 each coordinate Ca(2+). Ser76 is subject to Phosphoserine. EF-hand domains are found at residues 96 to 131 (DPEDVITGAFKVLDPEGKGTIKKKFLEELLTTQCDR) and 132 to 167 (FSQEEIKNMWAAFPPDVGGNVDYKNICYVITHGDAK). Thr102 carries the post-translational modification Phosphothreonine.

Myosin is a hexamer of 2 heavy chains and 4 light chains.

Functionally, plays a role in muscle contraction. The protein is Myosin regulatory light chain 2, skeletal muscle isoform of Bos taurus (Bovine).